A 463-amino-acid chain; its full sequence is Chaperone SurA (463 aa).

The first 25 residues, 1–25 (MTKPFSVVLASLLAITSTISPLASA), serve as a signal peptide directing secretion. PpiC domains lie at 174 to 276 (GSKY…KLME) and 289 to 388 (VTEY…QRVG). 2 disordered regions span residues 329–348 (ATAK…GDLG) and 434–463 (GDRA…KPTR). Low complexity predominate over residues 439 to 452 (NNATAAPAKSADPA). Residues 453–463 (LPAPPPAKPTR) show a composition bias toward pro residues.

The protein localises to the periplasm. It carries out the reaction [protein]-peptidylproline (omega=180) = [protein]-peptidylproline (omega=0). Its function is as follows. Chaperone involved in the correct folding and assembly of outer membrane proteins. Recognizes specific patterns of aromatic residues and the orientation of their side chains, which are found more frequently in integral outer membrane proteins. May act in both early periplasmic and late outer membrane-associated steps of protein maturation. The chain is Chaperone SurA from Xanthomonas oryzae pv. oryzae (strain MAFF 311018).